A 163-amino-acid polypeptide reads, in one-letter code: Protein-export protein SecB (163 aa).

It belongs to the SecB family. As to quaternary structure, homotetramer, a dimer of dimers. One homotetramer interacts with 1 SecA dimer.

The protein resides in the cytoplasm. Its function is as follows. One of the proteins required for the normal export of preproteins out of the cell cytoplasm. It is a molecular chaperone that binds to a subset of precursor proteins, maintaining them in a translocation-competent state. It also specifically binds to its receptor SecA. This Caulobacter vibrioides (strain ATCC 19089 / CIP 103742 / CB 15) (Caulobacter crescentus) protein is Protein-export protein SecB.